A 696-amino-acid chain; its full sequence is Chitin synthase regulator SKT5 (696 aa).

2 disordered regions span residues 37-67 (GQDF…SANQ) and 90-145 (QEED…IKKR). The span at 41–53 (SDNKENRENRDNE) shows a compositional bias: basic and acidic residues. Residues 104-126 (LNNSNNTSLSSLGSTPTNSPSPG) show a composition bias toward low complexity. The span at 129-139 (RQTNSSTSLTK) shows a compositional bias: polar residues. Ser-148 carries the post-translational modification Phosphoserine. 7 Sel1-like repeats span residues 271–306 (SDAQ…KHGH), 307–342 (IESA…SRNH), 343–382 (PSAM…ARAN), 386–423 (AAAP…SLGH), 424–460 (VPSA…LKGD), 461–498 (SVAM…NAGL), and 499–534 (PKAQ…GNED). 2 positions are modified to phosphoserine: Ser-561 and Ser-563. Thr-564 carries the phosphothreonine modification. Composition is skewed to polar residues over residues 576 to 593 (SNVG…TFFT), 605 to 634 (LQIN…SSAK), and 651 to 661 (VSLSNMGSSNM). The interval 576–696 (SNVGSNSRVS…GKKKKDCVIM (121 aa)) is disordered. The span at 662 to 675 (IRKDFPAVKTESKK) shows a compositional bias: basic and acidic residues. Basic residues predominate over residues 680–696 (KNKKDKQGKKKKDCVIM). A Cysteine methyl ester modification is found at Cys-693. A lipid anchor (S-farnesyl cysteine) is attached at Cys-693. A propeptide spans 694–696 (VIM) (removed in mature form).

The protein belongs to the SKT5 family. In terms of assembly, may interact with CHS3 and seems to be an adapter (along with BNI4) to link CHS3 to septins. In terms of processing, farnesylation is required for chitin synthase CHS3 activity but is not required for SKT5 membrane association.

Its subcellular location is the cell membrane. Activator of the chitin synthase CHS3 which polymerizes chitin, a structural polymer of the fungal cell wall. The polypeptide is Chitin synthase regulator SKT5 (Saccharomyces cerevisiae (strain ATCC 204508 / S288c) (Baker's yeast)).